Reading from the N-terminus, the 289-residue chain is F-box protein PP2-A11 (289 aa).

The 47-residue stretch at 23–69 folds into the F-box domain; the sequence is QPGLGDLPESCVALILQNLDPVEICRFSKLNTAFHGASWADFVWESK.

Part of a SCF (ASK-cullin-F-box) protein ligase complex. Interacts with SKP1A/ASK1.

Its subcellular location is the nucleus. It functions in the pathway protein modification; protein ubiquitination. Its function is as follows. Component of SCF(ASK-cullin-F-box) E3 ubiquitin ligase complexes, which may mediate the ubiquitination and subsequent proteasomal degradation of target proteins. The protein is F-box protein PP2-A11 (PP2A11) of Arabidopsis thaliana (Mouse-ear cress).